The primary structure comprises 235 residues: Mediator of RNA polymerase II transcription subunit 29 (235 aa).

The segment covering 1 to 14 (MMNQMGMMMQQQGV) has biased composition (low complexity). Residues 1–54 (MMNQMGMMMQQQGVGVPGGPGGVGGVGMPGPGGVGVAPGMMQSPQMQQAQQQQV) form a disordered region. The span at 15-36 (GVPGGPGGVGGVGMPGPGGVGV) shows a compositional bias: gly residues. Over residues 37-54 (APGMMQSPQMQQAQQQQV) the composition is skewed to low complexity.

Belongs to the Mediator complex subunit 29 family. In terms of assembly, component of the Mediator complex.

The protein resides in the nucleus. In terms of biological role, component of the Mediator complex, a coactivator involved in the regulated transcription of nearly all RNA polymerase II-dependent genes. Mediator functions as a bridge to convey information from gene-specific regulatory proteins to the basal RNA polymerase II transcription machinery. Mediator is recruited to promoters by direct interactions with regulatory proteins and serves as a scaffold for the assembly of a functional preinitiation complex with RNA polymerase II and the general transcription factors. This Anopheles gambiae (African malaria mosquito) protein is Mediator of RNA polymerase II transcription subunit 29 (ix).